A 232-amino-acid polypeptide reads, in one-letter code: Small ribosomal subunit protein uS3 (232 aa).

Residues 39-107 (IRKFLKKELF…DVAINIKEEK (69 aa)) enclose the KH type-2 domain. The segment at 213–232 (QPEPAEEKKGGRRPSRKRGE) is disordered. Positions 222-232 (GGRRPSRKRGE) are enriched in basic residues.

The protein belongs to the universal ribosomal protein uS3 family. In terms of assembly, part of the 30S ribosomal subunit. Forms a tight complex with proteins S10 and S14.

Binds the lower part of the 30S subunit head. Binds mRNA in the 70S ribosome, positioning it for translation. The polypeptide is Small ribosomal subunit protein uS3 (Sulfurovum sp. (strain NBC37-1)).